The following is a 239-amino-acid chain: Ribonuclease PH (239 aa).

Phosphate contacts are provided by residues arginine 86 and 124–126 (GTR).

Belongs to the RNase PH family. In terms of assembly, homohexameric ring arranged as a trimer of dimers.

The enzyme catalyses tRNA(n+1) + phosphate = tRNA(n) + a ribonucleoside 5'-diphosphate. Phosphorolytic 3'-5' exoribonuclease that plays an important role in tRNA 3'-end maturation. Removes nucleotide residues following the 3'-CCA terminus of tRNAs; can also add nucleotides to the ends of RNA molecules by using nucleoside diphosphates as substrates, but this may not be physiologically important. Probably plays a role in initiation of 16S rRNA degradation (leading to ribosome degradation) during starvation. This Sodalis glossinidius (strain morsitans) protein is Ribonuclease PH.